The sequence spans 298 residues: Mitochondrial basic amino acids transporter (298 aa).

The next 6 membrane-spanning stretches (helical) occupy residues 2 to 22 (ALDFLAGCAGGVAGVLVGHPF), 61 to 81 (GLGSPLLGLTFINALVFGVQG), 96 to 116 (FLAGAAAGAIQCVICCPMELA), 153 to 172 (GMVSTLLRETPSFGVYFLTY), 187 to 207 (LLVPKLLLAGGTSGIASWLST), and 255 to 275 (LLRAFPVNAATFATVTVVLSY). Solcar repeat units lie at residues 2–86 (ALDF…TLRA), 90–178 (DSPL…LTRA), and 185–275 (DRLL…VLSY).

It belongs to the mitochondrial carrier (TC 2.A.29) family.

Its subcellular location is the mitochondrion inner membrane. It catalyses the reaction L-lysine(out) + L-arginine(in) = L-lysine(in) + L-arginine(out). The enzyme catalyses L-histidine(out) + L-arginine(in) = L-histidine(in) + L-arginine(out). The catalysed reaction is L-ornithine(in) + L-arginine(out) = L-ornithine(out) + L-arginine(in). It carries out the reaction L-homoarginine(in) + L-arginine(out) = L-homoarginine(out) + L-arginine(in). It catalyses the reaction N(omega)-methyl-L-arginine(in) + L-arginine(out) = N(omega)-methyl-L-arginine(out) + L-arginine(in). The enzyme catalyses L-arginine(in) = L-arginine(out). The catalysed reaction is L-lysine(in) = L-lysine(out). It carries out the reaction L-ornithine(in) = L-ornithine(out). It catalyses the reaction L-histidine(out) = L-histidine(in). Its function is as follows. Mitochondrial transporter of arginine, lysine, homoarginine, methylarginine and, to a much lesser extent, ornithine and histidine. Does not transport carnitine nor acylcarnitines. Functions by both counter-exchange and uniport mechanisms. Plays a physiological role in the import of basic amino acids into mitochondria for mitochondrial protein synthesis and amino acid degradation. The polypeptide is Mitochondrial basic amino acids transporter (SLC25A29) (Bos taurus (Bovine)).